Here is a 557-residue protein sequence, read N- to C-terminus: Estrogen receptor beta (557 aa).

A modulating region spans residues Met-1–Tyr-154. NR C4-type zinc fingers lie at residues Cys-155–Cys-175 and Cys-191–Cys-215. Residues Cys-155–Met-220 constitute a DNA-binding region (nuclear receptor). The disordered stretch occupies residues Leu-240–Lys-268. The NR LBD domain occupies Thr-272 to His-508. Residues Ser-513–Gln-557 form a disordered region. Polar residues predominate over residues Gly-539–Gln-557.

Belongs to the nuclear hormone receptor family. NR3 subfamily. In terms of assembly, binds DNA as a homodimer. Can form a heterodimer with ER-alpha.

The protein localises to the nucleus. Binds estrogens with an affinity similar to that of ER-alpha, and activates expression of reporter genes containing estrogen response elements (ERE) in an estrogen-dependent manner. This Oreochromis niloticus (Nile tilapia) protein is Estrogen receptor beta (esr2).